The sequence spans 268 residues: Centromere protein Q (268 aa).

The interval 1–31 (MSGKANASKKNFEQLKRNPKRKKDNEEVVLS) is disordered. S31 carries the phosphoserine modification. Positions 170 to 203 (ELMTGNIQSLKNKIQILASEVEEEEERVKQIHQI) form a coiled coil. S249 is modified (phosphoserine).

The protein belongs to the CENP-Q/OKP1 family. Component of the CENPA-CAD complex, composed of CENPI, CENPK, CENPL, CENPO, CENPP, CENPQ, CENPR and CENPS. The CENPA-CAD complex interacts with the CENPA-NAC complex, at least composed of CENPA, CENPC, CENPH, CENPM, CENPN, CENPT and CENPU.

Its subcellular location is the nucleus. It localises to the chromosome. The protein localises to the centromere. Functionally, component of the CENPA-CAD (nucleosome distal) complex, a complex recruited to centromeres which is involved in assembly of kinetochore proteins, mitotic progression and chromosome segregation. May be involved in incorporation of newly synthesized CENPA into centromeres via its interaction with the CENPA-NAC complex. Plays an important role in chromosome congression and in the recruitment of CENP-O complex (which comprises CENPO, CENPP, CENPQ and CENPU), CENPE and PLK1 to the kinetochores. This is Centromere protein Q (CENPQ) from Macaca fascicularis (Crab-eating macaque).